The primary structure comprises 318 residues: tRNA U34 carboxymethyltransferase (318 aa).

Carboxy-S-adenosyl-L-methionine-binding positions include Lys85, Trp99, Lys104, Gly124, 175–176 (LD), Met190, Tyr194, and Arg311.

Belongs to the class I-like SAM-binding methyltransferase superfamily. CmoB family. As to quaternary structure, homotetramer.

The enzyme catalyses carboxy-S-adenosyl-L-methionine + 5-hydroxyuridine(34) in tRNA = 5-carboxymethoxyuridine(34) in tRNA + S-adenosyl-L-homocysteine + H(+). Catalyzes carboxymethyl transfer from carboxy-S-adenosyl-L-methionine (Cx-SAM) to 5-hydroxyuridine (ho5U) to form 5-carboxymethoxyuridine (cmo5U) at position 34 in tRNAs. This Ruthia magnifica subsp. Calyptogena magnifica protein is tRNA U34 carboxymethyltransferase.